Here is a 188-residue protein sequence, read N- to C-terminus: Hypoxanthine/guanine phosphoribosyltransferase (188 aa).

This sequence belongs to the purine/pyrimidine phosphoribosyltransferase family. Archaeal HPRT subfamily. Homodimer.

The protein resides in the cytoplasm. The catalysed reaction is IMP + diphosphate = hypoxanthine + 5-phospho-alpha-D-ribose 1-diphosphate. It carries out the reaction GMP + diphosphate = guanine + 5-phospho-alpha-D-ribose 1-diphosphate. It participates in purine metabolism; IMP biosynthesis via salvage pathway; IMP from hypoxanthine: step 1/1. Catalyzes a salvage reaction resulting in the formation of IMP that is energically less costly than de novo synthesis. The chain is Hypoxanthine/guanine phosphoribosyltransferase from Methanobrevibacter ruminantium (strain ATCC 35063 / DSM 1093 / JCM 13430 / OCM 146 / M1) (Methanobacterium ruminantium).